We begin with the raw amino-acid sequence, 440 residues long: MLERYANEEMKALWNEQTKFETYLEVEKAVVRAWNKLGQIQDSDCEKICLKAAFNLERIKEIEKTTKHDLIAFTTCVAESLGEESRFFHYGITSSDCIDTAMALLMTKSLKLIQKGVKNLYETLKNRALEHQDTLMVGRSHGVFGEPITFGLVLALFADEIKRHLKALDLTMEFISVGAISGAMGNFAHAPLELEELACGFLGLKTANISNQVIQRDRYARLACDLALLASSCEKIAVNIRHLQRSEVYEVEEAFSAGQKGSSAMPHKRNPILSENITGLCRVIRSFTTPMLENVALWHERDMSHSSVERFALPDLFITSDFMLSRLNSVIENLVVYPKNMLKNLALSGGLVFSQRVLLELPKKGLSREESYSIVQENAMKIWEVLQQGAFKNADENLFLNALLNDERLKKYLNESEIRACFDYSYYTKNVGAIFKRVFG.

Residues 4 to 5 (RY), 67 to 69 (KHD), and 93 to 94 (TS) each bind N(6)-(1,2-dicarboxyethyl)-AMP. His141 functions as the Proton donor/acceptor in the catalytic mechanism. Gln212 contacts N(6)-(1,2-dicarboxyethyl)-AMP. Catalysis depends on Ser262, which acts as the Proton donor/acceptor. N(6)-(1,2-dicarboxyethyl)-AMP is bound by residues Ser263, 268–270 (KRN), Asn276, and 307–311 (SVERF).

This sequence belongs to the lyase 1 family. Adenylosuccinate lyase subfamily. As to quaternary structure, homotetramer. Residues from neighboring subunits contribute catalytic and substrate-binding residues to each active site.

The catalysed reaction is N(6)-(1,2-dicarboxyethyl)-AMP = fumarate + AMP. It carries out the reaction (2S)-2-[5-amino-1-(5-phospho-beta-D-ribosyl)imidazole-4-carboxamido]succinate = 5-amino-1-(5-phospho-beta-D-ribosyl)imidazole-4-carboxamide + fumarate. It participates in purine metabolism; AMP biosynthesis via de novo pathway; AMP from IMP: step 2/2. The protein operates within purine metabolism; IMP biosynthesis via de novo pathway; 5-amino-1-(5-phospho-D-ribosyl)imidazole-4-carboxamide from 5-amino-1-(5-phospho-D-ribosyl)imidazole-4-carboxylate: step 2/2. Its function is as follows. Catalyzes two reactions in de novo purine nucleotide biosynthesis. Catalyzes the breakdown of 5-aminoimidazole- (N-succinylocarboxamide) ribotide (SAICAR or 2-[5-amino-1-(5-phospho-beta-D-ribosyl)imidazole-4-carboxamido]succinate) to 5-aminoimidazole-4-carboxamide ribotide (AICAR or 5-amino-1-(5-phospho-beta-D-ribosyl)imidazole-4-carboxamide) and fumarate, and of adenylosuccinate (ADS or N(6)-(1,2-dicarboxyethyl)-AMP) to adenosine monophosphate (AMP) and fumarate. This Helicobacter pylori (strain J99 / ATCC 700824) (Campylobacter pylori J99) protein is Adenylosuccinate lyase (purB).